Reading from the N-terminus, the 559-residue chain is Membrane protein insertase YidC (559 aa).

Residues 7–24 (ILWVIFSMSLVLLYDNWQ) form a helical membrane-spanning segment. 2 stretches are compositionally biased toward low complexity: residues 45–55 (APAASGAAAQG) and 63–82 (QPATGTSAAPAAGAAPQAAA). The tract at residues 45–82 (APAASGAAAQGDVPKANVQPATGTSAAPAAGAAPQAAA) is disordered. Transmembrane regions (helical) follow at residues 338-358 (LELVKDYGWLTILAKPLFWLL), 364-384 (FLGNWGWSIIALTVLIKLVFF), 434-454 (LGGCLPIVIQIPVFIALYWVL), 472-492 (LSVPDPFYILPIVMAVSMFVQ), and 507-527 (VMMIMPLVFSVMFFFFPAGLV).

This sequence belongs to the OXA1/ALB3/YidC family. Type 1 subfamily. As to quaternary structure, interacts with the Sec translocase complex via SecD. Specifically interacts with transmembrane segments of nascent integral membrane proteins during membrane integration.

It localises to the cell inner membrane. Functionally, required for the insertion and/or proper folding and/or complex formation of integral membrane proteins into the membrane. Involved in integration of membrane proteins that insert both dependently and independently of the Sec translocase complex, as well as at least some lipoproteins. Aids folding of multispanning membrane proteins. The chain is Membrane protein insertase YidC from Cupriavidus taiwanensis (strain DSM 17343 / BCRC 17206 / CCUG 44338 / CIP 107171 / LMG 19424 / R1) (Ralstonia taiwanensis (strain LMG 19424)).